The chain runs to 338 residues: MLISQRPTITEEFVNNARSRFVIEPLEPGFGYTLGNSLRRTLLSSIPGAAVTSVKIDGVLHEFTTISGVKEDVSDIILNIKGLVLSSDSDEPVVMQLVKEGPGVVTAGDIQPPAGVEIHNPDLHIATLNETAKIEIELIVERGRGYVPATVTATGGEIGRIPVDQIYSPVLKVSYKVEATRVEQRTDFDKLVIDVETKNSITARDALASAGKTLVELFGLARELNIAAEGIEIGPSPQETEYIAAYSMPIEDLDFSVRSYNCLKREDIHTVGELAERAESDLLDIRNFGQKSINEVKIKLAGLGLTLKDAPEDFDPSTLEGYDAETGGYIDVEAEDSE.

An alpha N-terminal domain (alpha-NTD) region spans residues 1–225 (MLISQRPTIT…ELFGLARELN (225 aa)). The alpha C-terminal domain (alpha-CTD) stretch occupies residues 242-338 (YIAAYSMPIE…YIDVEAEDSE (97 aa)). The interval 319 to 338 (LEGYDAETGGYIDVEAEDSE) is disordered.

It belongs to the RNA polymerase alpha chain family. In terms of assembly, homodimer. The RNAP catalytic core consists of 2 alpha, 1 beta, 1 beta' and 1 omega subunit. When a sigma factor is associated with the core the holoenzyme is formed, which can initiate transcription.

The catalysed reaction is RNA(n) + a ribonucleoside 5'-triphosphate = RNA(n+1) + diphosphate. DNA-dependent RNA polymerase catalyzes the transcription of DNA into RNA using the four ribonucleoside triphosphates as substrates. This is DNA-directed RNA polymerase subunit alpha from Corynebacterium glutamicum (strain ATCC 13032 / DSM 20300 / JCM 1318 / BCRC 11384 / CCUG 27702 / LMG 3730 / NBRC 12168 / NCIMB 10025 / NRRL B-2784 / 534).